We begin with the raw amino-acid sequence, 576 residues long: Putative export ATP-binding/permease protein RP696 (576 aa).

The 284-residue stretch at 20–303 (LIIVMISLLS…IFELLSEMHL (284 aa)) folds into the ABC transmembrane type-1 domain. The next 6 membrane-spanning stretches (helical) occupy residues 21 to 41 (IIVM…GSIF), 61 to 81 (ILYI…RSYF), 135 to 155 (FLSF…LMFF), 158 to 178 (FKLA…LIKF), 242 to 262 (ALFF…IVWI), and 277 to 297 (IISF…IFEL). An ABC transporter domain is found at 336 to 572 (IEFKNVDFTY…SEIYRNICRE (237 aa)). Position 371–378 (371–378 (GRSGAGKS)) interacts with ATP.

The protein belongs to the ABC transporter superfamily. Homodimer.

The protein localises to the cell inner membrane. Its function is as follows. Part of an ABC transporter complex. Transmembrane domains (TMD) form a pore in the inner membrane and the ATP-binding domain (NBD) is responsible for energy generation. The sequence is that of Putative export ATP-binding/permease protein RP696 from Rickettsia prowazekii (strain Madrid E).